We begin with the raw amino-acid sequence, 526 residues long: UDP-N-acetylmuramoyl-L-alanyl-D-glutamate--2,6-diaminopimelate ligase (526 aa).

2 residues coordinate UDP-N-acetyl-alpha-D-muramoyl-L-alanyl-D-glutamate: leucine 48 and serine 50. Residue 136–142 (GTSGKTT) coordinates ATP. UDP-N-acetyl-alpha-D-muramoyl-L-alanyl-D-glutamate-binding positions include 178–179 (TT), serine 205, and arginine 213. An N6-carboxylysine modification is found at lysine 245. Meso-2,6-diaminopimelate is bound by residues arginine 408, 432-435 (DNPR), glycine 490, and glutamate 494. Residues 432-435 (DNPR) carry the Meso-diaminopimelate recognition motif motif.

Belongs to the MurCDEF family. MurE subfamily. Requires Mg(2+) as cofactor. Post-translationally, carboxylation is probably crucial for Mg(2+) binding and, consequently, for the gamma-phosphate positioning of ATP.

Its subcellular location is the cytoplasm. It catalyses the reaction UDP-N-acetyl-alpha-D-muramoyl-L-alanyl-D-glutamate + meso-2,6-diaminopimelate + ATP = UDP-N-acetyl-alpha-D-muramoyl-L-alanyl-gamma-D-glutamyl-meso-2,6-diaminopimelate + ADP + phosphate + H(+). Its pathway is cell wall biogenesis; peptidoglycan biosynthesis. In terms of biological role, catalyzes the addition of meso-diaminopimelic acid to the nucleotide precursor UDP-N-acetylmuramoyl-L-alanyl-D-glutamate (UMAG) in the biosynthesis of bacterial cell-wall peptidoglycan. In Corynebacterium efficiens (strain DSM 44549 / YS-314 / AJ 12310 / JCM 11189 / NBRC 100395), this protein is UDP-N-acetylmuramoyl-L-alanyl-D-glutamate--2,6-diaminopimelate ligase.